The following is a 288-amino-acid chain: Ribosomal protein L11 methyltransferase (288 aa).

4 residues coordinate S-adenosyl-L-methionine: threonine 141, glycine 164, aspartate 186, and asparagine 227.

This sequence belongs to the methyltransferase superfamily. PrmA family.

It is found in the cytoplasm. The enzyme catalyses L-lysyl-[protein] + 3 S-adenosyl-L-methionine = N(6),N(6),N(6)-trimethyl-L-lysyl-[protein] + 3 S-adenosyl-L-homocysteine + 3 H(+). Its function is as follows. Methylates ribosomal protein L11. In Myxococcus xanthus (strain DK1622), this protein is Ribosomal protein L11 methyltransferase.